Here is a 343-residue protein sequence, read N- to C-terminus: CMP-N-acetylneuraminate-beta-galactosamide-alpha-2,3-sialyltransferase 1 (343 aa).

The Cytoplasmic portion of the chain corresponds to 1–11; the sequence is MAPMRKKSTLK. Residues 12-27 form a helical; Signal-anchor for type II membrane protein membrane-spanning segment; sequence LLTLLVLFIFLTSFFL. Asn-28 carries N-linked (GlcNAc...) asparagine glycosylation. Residues 28 to 343 lie on the Lumenal side of the membrane; sequence NYSHTVVTTA…INKIRIFKGR (316 aa). 3 cysteine pairs are disulfide-bonded: Cys-62–Cys-67, Cys-64–Cys-142, and Cys-145–Cys-284. Asn-82 carries an N-linked (GlcNAc...) asparagine glycan. Residue Gln-108 participates in substrate binding. A glycan (N-linked (GlcNAc...) asparagine) is linked at Asn-117. Asn-150, Asn-173, Tyr-233, Tyr-269, Gly-273, Gly-293, His-302, and His-319 together coordinate substrate. An N-linked (GlcNAc...) asparagine glycan is attached at Asn-326.

The protein belongs to the glycosyltransferase 29 family. Post-translationally, the soluble form derives from the membrane form by proteolytic processing. As to expression, the long isoform is abundant in salivary gland, liver, lung, and colon mucosa. Both long and short forms are detected in submaxillary salivary glands.

It is found in the golgi apparatus. The protein resides in the golgi stack membrane. Its subcellular location is the trans-Golgi network membrane. The protein localises to the secreted. The enzyme catalyses a beta-D-galactosyl-(1-&gt;3)-N-acetyl-alpha-D-galactosaminyl derivative + CMP-N-acetyl-beta-neuraminate = an N-acetyl-alpha-neuraminyl-(2-&gt;3)-beta-D-galactosyl-(1-&gt;3)-N-acetyl-alpha-D-galactosaminyl derivative + CMP + H(+). It carries out the reaction a ganglioside GM1 (d18:1(4E)) + CMP-N-acetyl-beta-neuraminate = a ganglioside GD1a (d18:1(4E)) + CMP + H(+). The catalysed reaction is ganglioside GM1 (d18:1(4E)/18:0) + CMP-N-acetyl-beta-neuraminate = ganglioside GD1a (18:1(4E)/18:0) + CMP + H(+). It catalyses the reaction a ganglioside GA1 (d18:1(4E)) + CMP-N-acetyl-beta-neuraminate = a ganglioside GM1b (d18:1(4E)) + CMP + H(+). The enzyme catalyses a ganglioside GD1b + CMP-N-acetyl-beta-neuraminate = a ganglioside GT1b + CMP + H(+). It carries out the reaction a 3-O-[beta-D-galactosyl-(1-&gt;3)-N-acetyl-alpha-D-galactosaminyl]-L-threonyl-[protein] + CMP-N-acetyl-beta-neuraminate = a 3-O-[N-acetyl-alpha-neuraminyl-(2-&gt;3)-beta-D-galactosyl-(1-&gt;3)-N-acetyl-alpha-D-galactosaminyl]-L-threonyl-[protein] + CMP + H(+). The catalysed reaction is a 3-O-[beta-D-galactosyl-(1-&gt;3)-N-acetyl-alpha-D-galactosaminyl]-L-seryl-[protein] + CMP-N-acetyl-beta-neuraminate = 3-O-[N-acetyl-alpha-neuraminyl-(2-&gt;3)-beta-D-galactosyl-(1-&gt;3)-N-acetyl-alpha-D-galactosaminyl]-L-seryl-[protein] + CMP + H(+). The protein operates within protein modification; protein glycosylation. Its pathway is glycolipid biosynthesis. In terms of biological role, a beta-galactoside alpha2-&gt;3 sialyltransferase involved in terminal sialylation of glycoproteins and glycolipids. Catalyzes the transfer of sialic acid (N-acetyl-neuraminic acid; Neu5Ac) from the nucleotide sugar donor CMP-Neu5Ac onto acceptor Galbeta-(1-&gt;3)-GalNAc-terminated glycoconjugates through an alpha2-3 linkage. Adds sialic acid to the core 1 O-glycan, Galbeta-(1-&gt;3)-GalNAc-O-Ser/Thr, which is a major structure of mucin-type O-glycans. As part of a homeostatic mechanism that regulates CD8-positive T cell numbers, sialylates core 1 O-glycans of T cell glycoproteins, SPN/CD43 and PTPRC/CD45. Prevents premature apoptosis of thymic CD8-positive T cells prior to peripheral emigration, whereas in the secondary lymphoid organs controls the survival of CD8-positive memory T cells generated following a successful immune response. Transfers sialic acid to asialofetuin, presumably onto Galbeta-(1-&gt;3)-GalNAc-O-Ser. Sialylates GM1a, GA1 and GD1b gangliosides to form GD1a, GM1b and GT1b, respectively. The polypeptide is CMP-N-acetylneuraminate-beta-galactosamide-alpha-2,3-sialyltransferase 1 (ST3GAL1) (Sus scrofa (Pig)).